The sequence spans 509 residues: DNA primase DnaG (509 aa).

Residues 167 to 253 enclose the Toprim domain; it reads DAIVVVEGRA…CVEDLARHEV (87 aa). 3 residues coordinate Mg(2+): Glu173, Asp215, and Asp217. The tract at residues 267–411 is disordered; that stretch reads KQAASDDADP…ASTDEQPKTL (145 aa). Low complexity-rich tracts occupy residues 313 to 331 and 383 to 402; these read PVSS…ETAA and ESTA…AAGA.

This sequence belongs to the archaeal DnaG primase family. In terms of assembly, forms a ternary complex with MCM helicase and DNA. Requires Mg(2+) as cofactor.

The catalysed reaction is ssDNA + n NTP = ssDNA/pppN(pN)n-1 hybrid + (n-1) diphosphate.. Its function is as follows. RNA polymerase that catalyzes the synthesis of short RNA molecules used as primers for DNA polymerase during DNA replication. The polypeptide is DNA primase DnaG (Natronomonas pharaonis (strain ATCC 35678 / DSM 2160 / CIP 103997 / JCM 8858 / NBRC 14720 / NCIMB 2260 / Gabara) (Halobacterium pharaonis)).